Reading from the N-terminus, the 1000-residue chain is ATP-dependent DNA/RNA helicase DHX36 (1000 aa).

The interval 1–43 (MSYDYHQSWSRDGGPRGSGQGSGGGGGGSRGSGGGGGGRGGRG) is required for recruitment to cytoplasmic stress granules. The tract at residues 1 to 53 (MSYDYHQSWSRDGGPRGSGQGSGGGGGGSRGSGGGGGGRGGRGRHPAHLKGRE) is disordered. Positions 1 to 96 (MSYDYHQSWS…IVQLLNSVQA (96 aa)) are required for the pre-miR-134 transport. A necessary for nuclear and nucleolar caps localizations region spans residues 1–192 (MSYDYHQSWS…KKTDPRYIEM (192 aa)). Gly residues predominate over residues 15-40 (PRGSGQGSGGGGGGSRGSGGGGGGRG). The DSM (DHX36-specific motif) stretch occupies residues 45–67 (HPAHLKGREIGLWYAKKQTQKNK). A required for G4-DNA- and G4-RNA-binding region spans residues 45 to 97 (HPAHLKGREIGLWYAKKQTQKNKEAERQERAVVHMDERREEQIVQLLNSVQAK). RecA-like domain regions lie at residues 98–378 (NDKD…MIHI) and 379–620 (PGFT…DYQL). Position 153 is a phosphoserine (Ser153). The region spanning 209–379 (VNLINNHQVT…FGNCPMIHIP (171 aa)) is the Helicase ATP-binding domain. An ATP-binding site is contributed by 225-230 (GCGKTT). The segment at 257-309 (RRISAISVAERVAAERAESCGNGNSTGYQIRLQSRLPRKQGSILYCTTGIILQ) is necessary for interaction with single-stranded DNA at the 3'-end of the G4-DNA structure. The DEAH box motif lies at 326 to 329 (DEIH). Positions 327 and 329 each coordinate Mg(2+). The Helicase C-terminal domain occupies 469–639 (ALIRYIVLEE…ELCLQIKILR (171 aa)). A necessary for interaction with single-stranded DNA at the 3'-end of the G4-DNA structure region spans residues 490–549 (WDNISTLHDLLMSQVMFKSDRFLIIPLHSLMPTVNQTQVFKKTPPGVRKIVIATNIAETS). The Nuclear localization signal motif lies at 509–520 (DRFLIIPLHSLM). Residues Ser549 and 594 to 597 (RAGR) contribute to the ATP site. A WH domain region spans residues 621–690 (PEILRTPLEE…LGVHLARLPV (70 aa)). 3 necessary for interaction with single-stranded DNA at the 3'-end of the G4-DNA structure regions span residues 630 to 689 (ELCL…ARLP), 841 to 852 (NLGKKRKMVKVH), and 862 to 892 (HPKS…IYLY). Residues 833 to 897 (PKVAKIRLNL…SIYLYDCTEV (65 aa)) are OB-fold-like subdomains. Lys939 carries the post-translational modification N6-acetyllysine.

As to quaternary structure, found in a multi-helicase-TICAM1 complex at least composed of DHX36, DDX1, DDX21 and TICAM1; this complex exists in resting cells with or without dsRNA poly(I:C) ligand stimulation. Interacts (via C-terminus) with TICAM1 (via TIR domain). Interacts (via C-terminus) with DDX21; this interaction serves as bridges to TICAM1. Interacts with TERT; this interaction is dependent on the ability of DHX36 to bind to the G-quadruplex RNA (G4-RNA) structure present in the telomerase RNA template component (TERC). Interacts with DKC1; this interaction is dependent on the ability of DHX36 to bind to the G4-RNA structure present in TERC. Interacts with PARN; this interaction stimulates PARN to enhance uPA mRNA decay. Interacts with EXOSC3; this interaction occurs in a RNase-insensitive manner. Interacts with EXOSC10; this interaction occurs in a RNase-insensitive manner. Interacts with ILF3; this interaction occurs in a RNA-dependent manner. Interacts with ELAVL1; this interaction occurs in an RNA-dependent manner. Interacts with DDX5; this interaction occurs in a RNA-dependent manner. Interacts with DDX17; this interaction occurs in a RNA-dependent manner. Interacts with HDAC1; this interaction occurs in a RNA-dependent manner. Interacts with HDAC3; this interaction occurs in a RNA-dependent manner. Interacts with HDAC4. Interacts with AGO1. Interacts with AGO2. Interacts with ERCC6. It depends on Mg(2+) as a cofactor.

Its subcellular location is the nucleus. It is found in the cytoplasm. The protein localises to the cytosol. The protein resides in the stress granule. It localises to the nucleus speckle. Its subcellular location is the chromosome. It is found in the telomere. The protein localises to the mitochondrion. The protein resides in the perikaryon. It localises to the cell projection. Its subcellular location is the dendrite. It is found in the axon. It catalyses the reaction ATP + H2O = ADP + phosphate + H(+). With respect to regulation, ATPase activity is enhanced in the presence of homomeric poly(U) RNAs, but not by double-stranded DNA (dsDNA), double-stranded RNA (dsRNA) and tRNA. Functionally, multifunctional ATP-dependent helicase that unwinds G-quadruplex (G4) structures. Plays a role in many biological processes such as genomic integrity, gene expression regulations and as a sensor to initiate antiviral responses. G4 structures correspond to helical structures containing guanine tetrads. Binds with high affinity to and unwinds G4 structures that are formed in nucleic acids (G4-DNA and G4-RNA). Plays a role in genomic integrity. Converts the G4-RNA structure present in telomerase RNA template component (TREC) into a double-stranded RNA to promote P1 helix formation that acts as a template boundary ensuring accurate reverse transcription. Plays a role in transcriptional regulation. Resolves G4-DNA structures in promoters of genes, such as YY1, KIT/c-kit and ALPL and positively regulates their expression. Plays a role in post-transcriptional regulation. Unwinds a G4-RNA structure located in the 3'-UTR polyadenylation site of the pre-mRNA TP53 and stimulates TP53 pre-mRNA 3'-end processing in response to ultraviolet (UV)-induced DNA damage. Binds to the precursor-microRNA-134 (pre-miR-134) terminal loop and regulates its transport into the synapto-dendritic compartment. Involved in the pre-miR-134-dependent inhibition of target gene expression and the control of dendritic spine size. Plays a role in the regulation of cytoplasmic mRNA translation and mRNA stability. Binds to both G4-RNA structures and alternative non-quadruplex-forming sequence within the 3'-UTR of the PITX1 mRNA regulating negatively PITX1 protein expression. Binds to both G4-RNA structure in the 5'-UTR and AU-rich elements (AREs) localized in the 3'-UTR of NKX2-5 mRNA to either stimulate protein translation or induce mRNA decay in an ELAVL1-dependent manner, respectively. Also binds to ARE sequences present in several mRNAs mediating exosome-mediated 3'-5' mRNA degradation. Involved in cytoplasmic urokinase-type plasminogen activator (uPA) mRNA decay. Component of a multi-helicase-TICAM1 complex that acts as a cytoplasmic sensor of viral double-stranded RNA (dsRNA) and plays a role in the activation of a cascade of antiviral responses including the induction of pro-inflammatory cytokines via the adapter molecule TICAM1. Required for the early embryonic development and hematopoiesis. Involved in the regulation of cardioblast differentiation and proliferation during heart development. Involved in spermatogonia differentiation. May play a role in ossification. The protein is ATP-dependent DNA/RNA helicase DHX36 of Rattus norvegicus (Rat).